We begin with the raw amino-acid sequence, 348 residues long: Abnormal cell lineage protein 44 (348 aa).

An N-terminal signal peptide occupies residues M1 to A25. 11 disulfide bridges follow: C91–C102, C141–C149, C151–C165, C213–C227, C215–C222, C272–C299, C282–C294, C298–C338, C314–C329, C316–C326, and C321–C322. Residue S219 is the site of O-palmitoleoyl serine; by mom-1 attachment. N286 is a glycosylation site (N-linked (GlcNAc...) asparagine).

Belongs to the Wnt family. Post-translationally, palmitoleoylation is required for efficient binding to frizzled receptors. Depalmitoleoylation leads to Wnt signaling pathway inhibition. As to expression, expressed in the tail hypodermis.

Its subcellular location is the secreted. It is found in the extracellular space. The protein localises to the extracellular matrix. Functionally, ligand for members of the frizzled family of seven transmembrane receptors. Affects male tail development, vulval precursor cell specification and egg laying. Involved in morphogenesis by influencing polarity of asymmetric cell divisions of the B, U, and F cells in the male, and the T cell in males and hermaphrodites. Controls spindle orientation in B-gamma cell division during male copulatory spicule development. Involved in specification of the P7.p lineage during vulval development. Has a role in providing polarity and default lin-17 localization in axon development and positioning of neuromuscular synapses in DA9 regions by negatively regulating synaptogenesis. Plays a role in motorneuron development by promoting the extension of the anterior neurite of ventral D-type GABAergic motorneurons along the anterior-posterior axis of the ventral nerve cord. Positively regulates cilium position and dendrite morphogenesis in postembryonic PQR gas-sensing neurons. This is likely through regulating the localization of grdn-1 to the distal dendrites of PQR sensory neurons. The polypeptide is Abnormal cell lineage protein 44 (Caenorhabditis elegans).